A 313-amino-acid chain; its full sequence is Ribosomal protein L11 methyltransferase (313 aa).

Residues T161, G182, D204, and N247 each contribute to the S-adenosyl-L-methionine site.

Belongs to the methyltransferase superfamily. PrmA family.

The protein resides in the cytoplasm. It carries out the reaction L-lysyl-[protein] + 3 S-adenosyl-L-methionine = N(6),N(6),N(6)-trimethyl-L-lysyl-[protein] + 3 S-adenosyl-L-homocysteine + 3 H(+). Methylates ribosomal protein L11. This is Ribosomal protein L11 methyltransferase from Alkaliphilus oremlandii (strain OhILAs) (Clostridium oremlandii (strain OhILAs)).